Consider the following 819-residue polypeptide: Zinc finger protein with KRAB and SCAN domains 5 (819 aa).

One can recognise an SCAN box domain in the interval 51–132 (QRFKHFQYHE…AVIESIQREL (82 aa)). Residues Lys214, Lys246, and Lys302 each participate in a glycyl lysine isopeptide (Lys-Gly) (interchain with G-Cter in SUMO2) cross-link. Residues 216-287 (EDVADVAVSF…HWVAAERTEK (72 aa)) enclose the KRAB domain. Disordered stretches follow at residues 236 to 263 (SQKS…KEGN) and 283 to 340 (ERTE…GERG). Residues 240–249 (LGRDSRKEDC) show a composition bias toward basic and acidic residues. The segment covering 329–340 (VNRKQKSNGERG) has biased composition (basic and acidic residues). 9 C2H2-type zinc fingers span residues 341-363 (HRCG…RRIH), 369-391 (FKCG…QRVH), 397-419 (YKCQ…HSVH), 425-447 (YGCN…LKRH), 540-562 (HQCN…RRIH), 568-590 (FRCE…HRVH), 596-618 (YACH…QSVH), 624-646 (FKCN…LRLH), and 652-674 (HQCH…QVLH). Lys700 is covalently cross-linked (Glycyl lysine isopeptide (Lys-Gly) (interchain with G-Cter in SUMO2)). C2H2-type zinc fingers lie at residues 708 to 730 (YQCD…YRTH), 764 to 786 (HQCN…QRIH), and 792 to 814 (LQCK…LRSH). A Glycyl lysine isopeptide (Lys-Gly) (interchain with G-Cter in SUMO2) cross-link involves residue Lys776.

The protein belongs to the krueppel C2H2-type zinc-finger protein family. As to expression, testis specific.

The protein localises to the nucleus. Functionally, may be involved in transcriptional regulation. The polypeptide is Zinc finger protein with KRAB and SCAN domains 5 (Zkscan5) (Mus musculus (Mouse)).